Consider the following 262-residue polypeptide: Type III pantothenate kinase (262 aa).

6-13 (DVGNTNAV) contacts ATP. Substrate-binding positions include tyrosine 100 and 107–110 (GADR). Catalysis depends on aspartate 109, which acts as the Proton acceptor. Aspartate 129 is a binding site for K(+). Residue threonine 132 participates in ATP binding. Threonine 184 contacts substrate.

The protein belongs to the type III pantothenate kinase family. Homodimer. NH4(+) is required as a cofactor. Requires K(+) as cofactor.

The protein resides in the cytoplasm. The enzyme catalyses (R)-pantothenate + ATP = (R)-4'-phosphopantothenate + ADP + H(+). Its pathway is cofactor biosynthesis; coenzyme A biosynthesis; CoA from (R)-pantothenate: step 1/5. Its function is as follows. Catalyzes the phosphorylation of pantothenate (Pan), the first step in CoA biosynthesis. This chain is Type III pantothenate kinase, found in Bacillus cytotoxicus (strain DSM 22905 / CIP 110041 / 391-98 / NVH 391-98).